The following is a 293-amino-acid chain: Sec-independent protein translocase protein TatC (293 aa).

The next 6 membrane-spanning stretches (helical) occupy residues 35–55, 87–107, 123–143, 173–193, 204–224, and 228–248; these read AAIA…QPFI, LLKV…LYQA, LFGF…ISYF, ILKF…LVGI, ILKS…LTAP, and IMMM…AIGI.

The protein belongs to the TatC family. As to quaternary structure, the Tat system comprises two distinct complexes: a TatABC complex, containing multiple copies of TatA, TatB and TatC subunits, and a separate TatA complex, containing only TatA subunits. Substrates initially bind to the TatABC complex, which probably triggers association of the separate TatA complex to form the active translocon.

It localises to the cell membrane. Its function is as follows. Part of the twin-arginine translocation (Tat) system that transports large folded proteins containing a characteristic twin-arginine motif in their signal peptide across membranes. Together with TatB, TatC is part of a receptor directly interacting with Tat signal peptides. This chain is Sec-independent protein translocase protein TatC, found in Rothia mucilaginosa (strain DY-18) (Stomatococcus mucilaginosus).